Consider the following 445-residue polypeptide: Allantoinase (445 aa).

Zn(2+) contacts are provided by H63, H65, K150, H186, H238, and D311. The residue at position 150 (K150) is an N6-carboxylysine.

This sequence belongs to the metallo-dependent hydrolases superfamily. Allantoinase family. As to quaternary structure, homotetramer. It depends on Zn(2+) as a cofactor. Post-translationally, carboxylation allows a single lysine to coordinate two zinc ions.

It catalyses the reaction (S)-allantoin + H2O = allantoate + H(+). Its pathway is nitrogen metabolism; (S)-allantoin degradation; allantoate from (S)-allantoin: step 1/1. Its function is as follows. Catalyzes the conversion of allantoin (5-ureidohydantoin) to allantoic acid by hydrolytic cleavage of the five-member hydantoin ring. This chain is Allantoinase, found in Streptomyces avermitilis (strain ATCC 31267 / DSM 46492 / JCM 5070 / NBRC 14893 / NCIMB 12804 / NRRL 8165 / MA-4680).